The sequence spans 513 residues: Autophagy-related protein 18 (513 aa).

The WD 1 repeat unit spans residues 2 to 40 (SDLPIINFINFNQNGTCISIGTSQGFKIFNCEPFGRFYQ). The segment at 167–225 (NNINIKKSDAAEDPLRKDHFAYDPSDHSHPQSTTESTSNNHNRTYSSGNNNNTNSNPNK) is disordered. Positions 172–195 (KKSDAAEDPLRKDHFAYDPSDHSH) are enriched in basic and acidic residues. Residues 205-225 (NNHNRTYSSGNNNNTNSNPNK) are compositionally biased toward low complexity. The stretch at 248 to 288 (AHKGEIAALKLSADGTLLATASEKGTIIRVFNVENGSKVYQ) is one WD 2 repeat. Residues 289–292 (FRRG) form a necessary for proper localization to vacuole membrane region. A L/FRRG motif motif is present at residues 289 to 293 (FRRGT). The WD 3 repeat unit spans residues 293–332 (TYSTKISSLSFSKDNQFLAVCSSSKTVHIFKLGEKIIDNT). Residues 333–398 (KPNELNSDDD…TVGRMIRKSS (66 aa)) are disordered. Acidic residues predominate over residues 338–369 (NSDDDMDDDLLPQFENGDDEEEVDEETLDEEA).

This sequence belongs to the WD repeat PROPPIN family. Component of the PI(3,5)P2 regulatory complex. Interacts with ATG2 and ATG9. The ATG2-ATG18 complex is essential for autophagosome formation.

It is found in the preautophagosomal structure membrane. The protein resides in the vacuole membrane. It localises to the endosome membrane. Functionally, component of the PI(3,5)P2 regulatory complex that regulates both the synthesis and turnover of phosphatidylinositol 3,5-bisphosphate (PtdIns(3,5)P2). Plays an important role in osmotically-induced vacuole fragmentation. Required for cytoplasm to vacuole transport (Cvt) vesicle formation, pexophagy and starvation-induced autophagy. Involved in correct ATG9 trafficking to the pre-autophagosomal structure. With ATG2, protects ATG8 from ATG4-mediated cleavage. The protein is Autophagy-related protein 18 of Kluyveromyces marxianus (strain DMKU3-1042 / BCC 29191 / NBRC 104275) (Yeast).